We begin with the raw amino-acid sequence, 251 residues long: HTH-type transcriptional regulator UlaR (251 aa).

Residues 3–58 (EAQRHQILLEMLAQLGFVTVEKVVERLGISPATARRDINKLDESGKLKKVRNGAEA) form the HTH deoR-type domain. The segment at residues 20–39 (VTVEKVVERLGISPATARRD) is a DNA-binding region (H-T-H motif).

The protein resides in the cytoplasm. Its function is as follows. Represses ulaG and the ulaABCDEF operon. The chain is HTH-type transcriptional regulator UlaR from Escherichia coli (strain SMS-3-5 / SECEC).